Reading from the N-terminus, the 189-residue chain is Elongation factor P (189 aa).

An N6-(3,6-diaminohexanoyl)-5-hydroxylysine modification is found at Lys34.

The protein belongs to the elongation factor P family. In terms of processing, may be beta-lysylated on the epsilon-amino group of Lys-34 by the combined action of EpmA and EpmB, and then hydroxylated on the C5 position of the same residue by EpmC (if this protein is present). Lysylation is critical for the stimulatory effect of EF-P on peptide-bond formation. The lysylation moiety may extend toward the peptidyltransferase center and stabilize the terminal 3-CCA end of the tRNA. Hydroxylation of the C5 position on Lys-34 may allow additional potential stabilizing hydrogen-bond interactions with the P-tRNA.

The protein localises to the cytoplasm. It functions in the pathway protein biosynthesis; polypeptide chain elongation. Its function is as follows. Involved in peptide bond synthesis. Alleviates ribosome stalling that occurs when 3 or more consecutive Pro residues or the sequence PPG is present in a protein, possibly by augmenting the peptidyl transferase activity of the ribosome. Modification of Lys-34 is required for alleviation. This chain is Elongation factor P, found in Acinetobacter baumannii (strain AB307-0294).